A 207-amino-acid polypeptide reads, in one-letter code: Large ribosomal subunit protein uL4 (207 aa).

The disordered stretch occupies residues Lys-50 to Gln-75.

The protein belongs to the universal ribosomal protein uL4 family. As to quaternary structure, part of the 50S ribosomal subunit.

One of the primary rRNA binding proteins, this protein initially binds near the 5'-end of the 23S rRNA. It is important during the early stages of 50S assembly. It makes multiple contacts with different domains of the 23S rRNA in the assembled 50S subunit and ribosome. In terms of biological role, forms part of the polypeptide exit tunnel. This is Large ribosomal subunit protein uL4 from Rickettsia felis (strain ATCC VR-1525 / URRWXCal2) (Rickettsia azadi).